Here is a 351-residue protein sequence, read N- to C-terminus: Photosystem II D2 protein (351 aa).

A helical transmembrane segment spans residues 39 to 59 (CAYLALGGWLTGTTFVTSWYT). H116 is a chlorophyll a binding site. Residues 123–139 (GFMLRQFEIARLVGIRP) traverse the membrane as a helical segment. Pheophytin a-binding residues include Q128 and N141. The helical transmembrane segment at 151–164 (VFVSVFLMYPLGQS) threads the bilayer. Residue H196 coordinates chlorophyll a. A helical transmembrane segment spans residues 206–226 (GALLCAIHGATVENTLFEDGE). Residues H213 and F260 each coordinate a plastoquinone. H213 lines the Fe cation pocket. H267 is a Fe cation binding site. The chain crosses the membrane as a helical span at residues 277 to 293 (GLWMSAIGIVGLALNLR).

It belongs to the reaction center PufL/M/PsbA/D family. PSII is composed of 1 copy each of membrane proteins PsbA, PsbB, PsbC, PsbD, PsbE, PsbF, PsbH, PsbI, PsbJ, PsbK, PsbL, PsbM, PsbT, PsbX, PsbY, PsbZ, Psb30/Ycf12, peripheral proteins PsbO, CyanoQ (PsbQ), PsbU, PsbV and a large number of cofactors. It forms dimeric complexes. The D1/D2 heterodimer binds P680, chlorophylls that are the primary electron donor of PSII, and subsequent electron acceptors. It shares a non-heme iron and each subunit binds pheophytin, quinone, additional chlorophylls, carotenoids and lipids. There is also a Cl(-1) ion associated with D1 and D2, which is required for oxygen evolution. The PSII complex binds additional chlorophylls, carotenoids and specific lipids. is required as a cofactor.

Its subcellular location is the cellular thylakoid membrane. The enzyme catalyses 2 a plastoquinone + 4 hnu + 2 H2O = 2 a plastoquinol + O2. In terms of biological role, photosystem II (PSII) is a light-driven water:plastoquinone oxidoreductase that uses light energy to abstract electrons from H(2)O, generating O(2) and a proton gradient subsequently used for ATP formation. It consists of a core antenna complex that captures photons, and an electron transfer chain that converts photonic excitation into a charge separation. The D1/D2 (PsbA/PsbD) reaction center heterodimer binds P680, the primary electron donor of PSII as well as several subsequent electron acceptors. D2 is needed for assembly of a stable PSII complex. In Crocosphaera subtropica (strain ATCC 51142 / BH68) (Cyanothece sp. (strain ATCC 51142)), this protein is Photosystem II D2 protein.